A 79-amino-acid chain; its full sequence is UPF0291 protein SAV1341 (79 aa).

The disordered stretch occupies residues 56–79; that stretch reads IDPEGNDVTPEKIKEIQQKRDNKN. Residues 64–79 show a composition bias toward basic and acidic residues; sequence TPEKIKEIQQKRDNKN.

Belongs to the UPF0291 family.

The protein resides in the cytoplasm. The chain is UPF0291 protein SAV1341 from Staphylococcus aureus (strain Mu50 / ATCC 700699).